The chain runs to 526 residues: Acid-sensing ion channel 1 (526 aa).

The Cytoplasmic portion of the chain corresponds to M1–C49. A helical membrane pass occupies residues F50–Q66. Over Y67–E425 the chain is Extracellular. Intrachain disulfides connect C93/C194, C172/C179, C290/C365, C308/C361, C312/C359, C321/C343, and C323/C335. Residues N366 and N393 are each glycosylated (N-linked (GlcNAc...) asparagine). The discontinuously helical transmembrane segment at I426–Y456 threads the bilayer. Positions G442 to S444 match the GAS motif; ion selectivity filter motif. Residues E457–C526 are Cytoplasmic-facing. S477 is subject to Phosphoserine; by PKA. Position 497 is a phosphoserine (S497).

This sequence belongs to the amiloride-sensitive sodium channel (TC 1.A.6) family. ASIC1 subfamily. In terms of assembly, homotrimer. Heterotrimer; with other ASIC proteins producing channel with different properties. Interacts with PICK1; regulates ASIC1 clustering in membranes. Interacts with STOM; alters heterotrimeric ASIC channels activity. In terms of processing, pH-gating could be regulated by serine proteases. Post-translationally, phosphorylation by PKA regulates interaction with PICK1 and subcellular localization. Phosphorylation by PKC may regulate the channel. Expressed in brain areas receiving strong excitatory corticofugal input. In hippocampus, expressed in the hilus of the dentate gyrus. In the cerebral cortex expressed in anterior and posterior cingulate cortex, sensory and motor cortices. In the sensory cortex strongest expression is detected in the whisker barrel field. In sensorimotor and cingulate cortex expression is elevated in layer III. Also expressed in basal ganglia, striatum, ventral pallidum, olfactory tubercle, and nucleus accumbens. Weakly expressed in thalamus with the exception of the habenula and the medial septal nuclei. In olfactory bulb, preferentially expressed in the glomerular layer, within glomeruli. Expressed in cerebellum in the molecular and granule cell layers. Strongly expressed in amygdala complex, particularly in the lateral and basolateral nuclei. Isoform 1 is more abundant in brain compared to isoform 2 (at protein level). Expressed in the nodose ganglion and dorsal root ganglion. Expressed in dendritic spine cells.

It is found in the cell membrane. The protein resides in the postsynaptic cell membrane. The protein localises to the cell projection. It localises to the dendrite. The enzyme catalyses Na(+)(in) = Na(+)(out). The catalysed reaction is Ca(2+)(in) = Ca(2+)(out). It catalyses the reaction K(+)(in) = K(+)(out). It carries out the reaction Li(+)(in) = Li(+)(out). Inhibited by the diuretic drug amiloride. Its activity is regulated as follows. The activity of the channel is sensitive to rapid decrease in osmotic pressure. Functionally, forms voltage-independent, pH-gated trimeric sodium channels that act as postsynaptic excitatory receptors in the nervous system, playing a crucial role in regulating synaptic plasticity, learning, and memory. Upon extracellular pH drop this channel elicits transient, fast activating, and completely desensitizing inward currents. Displays high selectivity for sodium ions but can also permit the permeation of other cations. Regulates more or less directly intracellular calcium concentration and CaMKII phosphorylation, and thereby the density of dendritic spines. Modulates neuronal activity in the circuits underlying innate fear. Has high selectivity for sodium ions but is also potentially permeable to other cations including potassium. Could function in cochlear mechanoelectrical transduction. The protein is Acid-sensing ion channel 1 of Mus musculus (Mouse).